The sequence spans 216 residues: Phosphoenolpyruvate guanylyltransferase (216 aa).

The phosphoenolpyruvate site is built by threonine 143, glycine 159, and serine 162.

This sequence belongs to the CofC family.

The catalysed reaction is phosphoenolpyruvate + GTP + H(+) = enolpyruvoyl-2-diphospho-5'-guanosine + diphosphate. It participates in cofactor biosynthesis; coenzyme F420 biosynthesis. Its function is as follows. Guanylyltransferase that catalyzes the activation of phosphoenolpyruvate (PEP) as enolpyruvoyl-2-diphospho-5'-guanosine, via the condensation of PEP with GTP. It is involved in the biosynthesis of coenzyme F420, a hydride carrier cofactor. In Streptomyces scabiei (strain 87.22), this protein is Phosphoenolpyruvate guanylyltransferase.